The chain runs to 87 residues: Cytochrome c6 (87 aa).

The heme c site is built by Cys-10, Cys-13, His-14, and Met-56.

It belongs to the cytochrome c family. PetJ subfamily. In terms of assembly, monomer. Post-translationally, binds 1 heme c group covalently per subunit.

It is found in the plastid. Its subcellular location is the chloroplast thylakoid lumen. Functions as an electron carrier between membrane-bound cytochrome b6-f and photosystem I in oxygenic photosynthesis. This Euglena viridis (Cercaria viridis) protein is Cytochrome c6 (petJ).